The primary structure comprises 249 residues: Ribosomal RNA small subunit methyltransferase G (249 aa).

The S-adenosyl-L-methionine site is built by G86, F91, and R178.

This sequence belongs to the methyltransferase superfamily. RNA methyltransferase RsmG family.

Its subcellular location is the cytoplasm. In terms of biological role, specifically methylates the N7 position of a guanine in 16S rRNA. The polypeptide is Ribosomal RNA small subunit methyltransferase G (Bifidobacterium adolescentis (strain ATCC 15703 / DSM 20083 / NCTC 11814 / E194a)).